Reading from the N-terminus, the 196-residue chain is uncharacterized protein (196 aa).

Residues 22–42 (MIIIPMALLVFILIIGSFFAI) form a helical membrane-spanning segment.

It is found in the cell membrane. This is an uncharacterized protein from Lactobacillus acidophilus (strain ATCC 700396 / NCK56 / N2 / NCFM).